Reading from the N-terminus, the 149-residue chain is Deoxyuridine 5'-triphosphate nucleotidohydrolase (149 aa).

Residues 68–70 (RSG), asparagine 81, 85–87 (LID), and methionine 95 each bind substrate.

This sequence belongs to the dUTPase family. Requires Mg(2+) as cofactor.

It catalyses the reaction dUTP + H2O = dUMP + diphosphate + H(+). It functions in the pathway pyrimidine metabolism; dUMP biosynthesis; dUMP from dCTP (dUTP route): step 2/2. In terms of biological role, this enzyme is involved in nucleotide metabolism: it produces dUMP, the immediate precursor of thymidine nucleotides and it decreases the intracellular concentration of dUTP so that uracil cannot be incorporated into DNA. This chain is Deoxyuridine 5'-triphosphate nucleotidohydrolase, found in Herminiimonas arsenicoxydans.